Here is a 251-residue protein sequence, read N- to C-terminus: CDP-diacylglycerol pyrophosphatase (251 aa).

The helical transmembrane segment at 4-24 threads the bilayer; sequence AGLLFLVMIVIAVVAAGIGYW.

This sequence belongs to the Cdh family.

The protein resides in the cell inner membrane. It catalyses the reaction a CDP-1,2-diacyl-sn-glycerol + H2O = a 1,2-diacyl-sn-glycero-3-phosphate + CMP + 2 H(+). The protein operates within phospholipid metabolism; CDP-diacylglycerol degradation; phosphatidate from CDP-diacylglycerol: step 1/1. The chain is CDP-diacylglycerol pyrophosphatase from Escherichia coli (strain SE11).